A 574-amino-acid chain; its full sequence is MNTSPGIELGLFIALLAVLNIPLGTHLYKVLDKEGKTVFDPILKPLENLTYKLCSIDRSKEQSWIEYAVGLLCFNFVGILVSYLILRLQSILPLNPEKIGPMAPHIAFNTAISFATNTNWQSYVPEKQVSYFAQMFGLAVPNFTSAATGIAAAAALVRGIVRTEMKTVGNCWVDLIRIHYYLLLPLSLFIAIILLSQGVPQNFNAYVSYIPLELKSSLANLPVKLPQGPIASQEAIKLLGTNGGGFLNANSAHPYENPTPLSNFVEMLSIFLIPSALTYYFGLSCKKLGHGWSIWLTMTFCFLILTLSCFIFEQAGNPLFSSLGIKNQLNMEGKEMRFGIFDSSFFASVTTLASCGAVNSLHDSFQPLAGMIPLFNMGLGELIFGGVGSGLYGILLFVILSVFLFGLMIGRTPGYLGKRIGSYEIKMAVLALMIQYVLILGLSALALNSSWGTAALGNKGPHGLTEVLYAFTSTTENNGSAFGGLNATSKPFALLLGVAMFLGRYFVLIPILAIAGSLANQKRYASQTVFPTGGWLFIFVLGATIFLLAALNFFPALTVGPILEHFMIGMGKSF.

10 consecutive transmembrane segments (helical) span residues 7 to 27 (IELGLFIALLAVLNIPLGTHL), 65 to 85 (IEYAVGLLCFNFVGILVSYLI), 136 to 156 (FGLAVPNFTSAATGIAAAAAL), 175 to 195 (LIRIHYYLLLPLSLFIAIILL), 264 to 284 (FVEMLSIFLIPSALTYYFGLS), 292 to 312 (WSIWLTMTFCFLILTLSCFIF), 390 to 410 (GLYGILLFVILSVFLFGLMIG), 427 to 447 (MAVLALMIQYVLILGLSALAL), 494 to 514 (LLLGVAMFLGRYFVLIPILAI), and 534 to 554 (GWLFIFVLGATIFLLAALNFF).

It belongs to the KdpA family. In terms of assembly, the system is composed of three essential subunits: KdpA, KdpB and KdpC.

The protein localises to the cell inner membrane. In terms of biological role, part of the high-affinity ATP-driven potassium transport (or Kdp) system, which catalyzes the hydrolysis of ATP coupled with the electrogenic transport of potassium into the cytoplasm. This subunit binds the periplasmic potassium ions and delivers the ions to the membrane domain of KdpB through an intramembrane tunnel. This is Potassium-transporting ATPase potassium-binding subunit from Methylacidiphilum infernorum (isolate V4) (Methylokorus infernorum (strain V4)).